The sequence spans 679 residues: MSKNLLIELGLEELPAYVVTPSEKQLGERLATFLTENRLSFEDIQTFSTPRRLAVRVSGLADQQTDLTEDFKGPAKKIALDADGNFSKAAQGFVRGKGLTTDAIEFREVKGEEYVYVTKHEAGKPAKEVLLGVTEVLSAMTFPVSMHWANNSFEYIRPVHTLTVLLNDEALELDFLDIHSGRVSRGHRFLGTETTITSADSYEADLRSQCVIVDAKERQEMIVEQIKTLEVEQGVQVDIDEDLLNEVLNLVEFPTAFMGNFEAKYLDVPEEVLVTSMKNHQRYFVVRDQAGHLMPNFVSVRNGNDQAIENVIKGNEKVLVARLEDGEFFWREDQKLQIADLVAKLTNVTFHEKIGSLAEHMDRTRVIAASLAKEANLSAEEVTAVDRAAQIYKFDLLTGMVGEFDELQGIMGEKYALLAGEDAAVATAIREHYLPDAAGGALPETKVGVVLALADKLDTLLSFFSVGLIPSGSNDPYALRRATQGIVRILDHFGWRIPMDKLVDSLYDLSFDSLTYTNKADVMNFIRARVDKMMGKAAPKDIREAILASSTFVVPEMLAVAEALVKASHTENYKPAVESLSRAFNLAEKADASVQVDPSLFENEQENTLFAAIQGLTLAGSAAQQLEQVFALSPVINDFFDNTMVMAEDQALKNNRVAILSDLVSKAKTIAAFNQLNTK.

It belongs to the class-II aminoacyl-tRNA synthetase family. As to quaternary structure, tetramer of two alpha and two beta subunits.

It is found in the cytoplasm. The enzyme catalyses tRNA(Gly) + glycine + ATP = glycyl-tRNA(Gly) + AMP + diphosphate. The polypeptide is Glycine--tRNA ligase beta subunit (Streptococcus pyogenes serotype M12 (strain MGAS9429)).